The following is a 442-amino-acid chain: F-box protein KIB2 (442 aa).

Positions 62 to 109 constitute an F-box domain; that stretch reads SKQPVLVLDLLRSILERLSFVDFHRGRCISLEWYSASESCLAVKNPTS. The Nuclear localization signal signature appears at 236-243; the sequence is HKKGDENY.

Interacts with ASK7/BIN2/SK21.

The protein localises to the cytoplasm. It is found in the nucleus. Its subcellular location is the nucleolus. Component of SCF(ASK-cullin-F-box) E3 ubiquitin ligase complexes, which may mediate the ubiquitination and subsequent proteasomal degradation of target proteins. Required for brassinosteroid (BR) signal transduction. Mediates ASK7/BIN2/SK21 inactivation both by competing with substrate binding (e.g. BZR1) and by promoting its ubiquitination and subsequent proteasomal degradation. The sequence is that of F-box protein KIB2 from Arabidopsis thaliana (Mouse-ear cress).